A 216-amino-acid chain; its full sequence is Lipoprotein signal peptidase (216 aa).

The interval 1–21 (MATSRTAPTRAPSLRSSPALE) is disordered. A run of 3 helical transmembrane segments spans residues 31-51 (VGAL…DQIT), 89-109 (GSTW…IWYA), and 114-134 (STAW…NLTD). Active-site residues include D149 and D164. A helical membrane pass occupies residues 159 to 179 (IFNLADVAIVFSMGLFLLLTL). Residues 189–216 (QRDEGAGVSSASPAGDESAADKPENLSA) are disordered. Residues 207–216 (AADKPENLSA) show a composition bias toward basic and acidic residues.

Belongs to the peptidase A8 family.

It is found in the cell membrane. The catalysed reaction is Release of signal peptides from bacterial membrane prolipoproteins. Hydrolyzes -Xaa-Yaa-Zaa-|-(S,diacylglyceryl)Cys-, in which Xaa is hydrophobic (preferably Leu), and Yaa (Ala or Ser) and Zaa (Gly or Ala) have small, neutral side chains.. It functions in the pathway protein modification; lipoprotein biosynthesis (signal peptide cleavage). Functionally, this protein specifically catalyzes the removal of signal peptides from prolipoproteins. The chain is Lipoprotein signal peptidase from Leifsonia xyli subsp. xyli (strain CTCB07).